The chain runs to 268 residues: Early nodulin-20 (268 aa).

The signal sequence occupies residues 1–24; sequence MSSSSPILLMFIFSIWMLISYSES. One can recognise a Phytocyanin domain in the interval 25-129; that stretch reads TDYLVGDSEN…GLKLAVVVMV (105 aa). N-linked (GlcNAc...) asparagine glycosylation is present at Asn67. A disulfide bridge connects residues Cys83 and Cys117. Pro residues-rich tracts occupy residues 134–145 and 160–185; these read SSPPPPPSPPTP and PSPP…TPIP. The segment at 134–253 is disordered; it reads SSPPPPPSPP…SGSKGGGAGH (120 aa). A compositionally biased stretch (low complexity) spans 199-235; the sequence is PSLSKSPSPSESPSLAPSPSDSVASLAPSSSPSDESP. Ser243 is lipidated: GPI-anchor amidated serine. The propeptide at 244–268 is removed in mature form; sequence SGSKGGGAGHGFLEVSIAMMMFLIF.

This sequence belongs to the early nodulin-like (ENODL) family.

It localises to the cell membrane. May act as a carbohydrate transporter. The sequence is that of Early nodulin-20 from Medicago truncatula (Barrel medic).